The primary structure comprises 51 residues: Magnetosome protein Mms5 (51 aa).

Over 1–8 (MLSAKGVS) the chain is Lumenal. Positions 9–16 (LGLGLGLG) are LG region. The chain crosses the membrane as a helical span at residues 9–29 (LGLGLGLGAWGPVLLGVVGVA). The Cytoplasmic portion of the chain corresponds to 30–51 (GALALYGYYKNRNAEPAAAEAV).

Belongs to the magnetosome MamD/Mms5 family. May undergo N-terminal cleavage.

It is found in the magnetosome membrane. Might be involved in magnetite crystal growth. The sequence is that of Magnetosome protein Mms5 from Magnetospirillum gryphiswaldense (strain DSM 6361 / JCM 21280 / NBRC 15271 / MSR-1).